A 401-amino-acid chain; its full sequence is G2/mitotic-specific cyclin-B1 (401 aa).

Belongs to the cyclin family. Cyclin AB subfamily. In terms of assembly, interacts with the CDK1 protein kinase to form a serine/threonine kinase holoenzyme complex also known as maturation promoting factor (MPF). The cyclin subunit imparts substrate specificity to the complex.

Essential for the control of the cell cycle at the G2/M (mitosis) transition. This chain is G2/mitotic-specific cyclin-B1 (ccnb1), found in Oryzias luzonensis (Luzon ricefish).